The chain runs to 277 residues: Large ribosomal subunit protein uL2 (277 aa).

The interval T219–K277 is disordered. The segment covering A264–K277 has biased composition (basic and acidic residues).

The protein belongs to the universal ribosomal protein uL2 family. As to quaternary structure, part of the 50S ribosomal subunit. Forms a bridge to the 30S subunit in the 70S ribosome.

One of the primary rRNA binding proteins. Required for association of the 30S and 50S subunits to form the 70S ribosome, for tRNA binding and peptide bond formation. It has been suggested to have peptidyltransferase activity; this is somewhat controversial. Makes several contacts with the 16S rRNA in the 70S ribosome. This chain is Large ribosomal subunit protein uL2, found in Streptococcus pyogenes serotype M1.